A 397-amino-acid chain; its full sequence is Succinyl-diaminopimelate desuccinylase (397 aa).

His-73 serves as a coordination point for Zn(2+). Asp-75 is a catalytic residue. Asp-106 provides a ligand contact to Zn(2+). Glu-140 functions as the Proton acceptor in the catalytic mechanism. 3 residues coordinate Zn(2+): Glu-141, Glu-169, and His-366.

Belongs to the peptidase M20A family. DapE subfamily. Homodimer. It depends on Zn(2+) as a cofactor. Requires Co(2+) as cofactor.

The catalysed reaction is N-succinyl-(2S,6S)-2,6-diaminopimelate + H2O = (2S,6S)-2,6-diaminopimelate + succinate. It participates in amino-acid biosynthesis; L-lysine biosynthesis via DAP pathway; LL-2,6-diaminopimelate from (S)-tetrahydrodipicolinate (succinylase route): step 3/3. Functionally, catalyzes the hydrolysis of N-succinyl-L,L-diaminopimelic acid (SDAP), forming succinate and LL-2,6-diaminopimelate (DAP), an intermediate involved in the bacterial biosynthesis of lysine and meso-diaminopimelic acid, an essential component of bacterial cell walls. This Rhizobium johnstonii (strain DSM 114642 / LMG 32736 / 3841) (Rhizobium leguminosarum bv. viciae) protein is Succinyl-diaminopimelate desuccinylase.